The sequence spans 290 residues: Metallo-beta-lactamase L1 type 3 (290 aa).

Positions 1-21 (MRSTLLAFALAVALPAAHTSA) are cleaved as a signal peptide. Positions 22-33 (AEVPLPQLRAYT) are excised as a propeptide. Positions 105, 107, 109, 110, and 181 each coordinate Zn(2+). Residue D205 participates in substrate binding. C239 and C267 are joined by a disulfide. H246 provides a ligand contact to Zn(2+).

The protein belongs to the metallo-beta-lactamase superfamily. Class-B beta-lactamase family. In terms of assembly, homotetramer. Zn(2+) is required as a cofactor.

Its subcellular location is the periplasm. It catalyses the reaction a beta-lactam + H2O = a substituted beta-amino acid. With respect to regulation, inhibited by Hg(2+) or Cu(2+), and by chelating agents such as EDTA and O-phenanthroline. Reduced enzymatic activity in presence of cobalt, nickel, cadmium, and manganese. In terms of biological role, confers resistance to the different beta-lactams antibiotics (penicillin, cephalosporin and carbapenem) via the hydrolysis of the beta-lactam ring. This chain is Metallo-beta-lactamase L1 type 3, found in Stenotrophomonas maltophilia (Pseudomonas maltophilia).